Reading from the N-terminus, the 151-residue chain is UPF0208 membrane protein ECA3038 (151 aa).

2 helical membrane passes run 46-66 and 69-89; these read FGIR…IALG and LGPA…GLWW.

Belongs to the UPF0208 family.

It localises to the cell inner membrane. In Pectobacterium atrosepticum (strain SCRI 1043 / ATCC BAA-672) (Erwinia carotovora subsp. atroseptica), this protein is UPF0208 membrane protein ECA3038.